The sequence spans 222 residues: UPF0502 protein PBPRB0676 (222 aa).

The protein belongs to the UPF0502 family.

The protein is UPF0502 protein PBPRB0676 of Photobacterium profundum (strain SS9).